Consider the following 87-residue polypeptide: MKHLKFYSILFLFSIFVYKVNALQKILDGYFLSDEEGLFLSCKHKFDEYFCLEKCVESGAKDGYCVGHSFICFCKYEVGSSPRHFMF.

An N-terminal signal peptide occupies residues 1-22 (MKHLKFYSILFLFSIFVYKVNA). 3 cysteine pairs are disulfide-bonded: Cys42/Cys65, Cys51/Cys72, and Cys55/Cys74.

Belongs to the long (3 C-C) scorpion toxin superfamily. Sodium channel inhibitor family. As to expression, expressed by the venom gland.

The protein localises to the secreted. Its function is as follows. Putative sodium channel toxin. The polypeptide is Putative sodium channel toxin Ts38 (Tityus serrulatus (Brazilian scorpion)).